Here is a 281-residue protein sequence, read N- to C-terminus: Pantothenate synthetase (281 aa).

30–37 (MGALHAGH) is a binding site for ATP. His37 acts as the Proton donor in catalysis. Gln64 is a binding site for (R)-pantoate. A beta-alanine-binding site is contributed by Gln64. Residue 150–153 (GKKD) coordinates ATP. Gln156 contributes to the (R)-pantoate binding site. ATP-binding positions include Val179 and 187-190 (YSSR).

Belongs to the pantothenate synthetase family. As to quaternary structure, homodimer.

The protein resides in the cytoplasm. The enzyme catalyses (R)-pantoate + beta-alanine + ATP = (R)-pantothenate + AMP + diphosphate + H(+). The protein operates within cofactor biosynthesis; (R)-pantothenate biosynthesis; (R)-pantothenate from (R)-pantoate and beta-alanine: step 1/1. Catalyzes the condensation of pantoate with beta-alanine in an ATP-dependent reaction via a pantoyl-adenylate intermediate. The chain is Pantothenate synthetase from Akkermansia muciniphila (strain ATCC BAA-835 / DSM 22959 / JCM 33894 / BCRC 81048 / CCUG 64013 / CIP 107961 / Muc).